A 184-amino-acid chain; its full sequence is Dynactin subunit 6 (184 aa).

It belongs to the dynactin subunits 5/6 family. Dynactin subunit 6 subfamily. As to quaternary structure, subunit of dynactin, a multiprotein complex part of a tripartite complex with dynein and a adapter, such as BICDL1, BICD2 or HOOK3. The dynactin complex is built around ACTR1A/ACTB filament and consists of an actin-related filament composed of a shoulder domain, a pointed end and a barbed end.

The protein localises to the cytoplasm. It localises to the cytoskeleton. Functionally, part of the dynactin complex that activates the molecular motor dynein for ultra-processive transport along microtubules. This is Dynactin subunit 6 (dctn6) from Nematostella vectensis (Starlet sea anemone).